The following is a 959-amino-acid chain: Nucleoporin NUP100/NSP100 (959 aa).

Residues 1–104 (MFGNNRPMFG…NSSNASNGNT (104 aa)) form a disordered region. 3 FG repeats span residues 2-3 (FG), 9-10 (FG), and Gly17. The span at 12–36 (SNLSFGSNTSSFGGQQSQQPNSLFG) shows a compositional bias: polar residues. One copy of the SLFG 1; approximate repeat lies at 21–24 (SSFG). One copy of the SLFG 2 repeat lies at 33 to 36 (SLFG). A compositionally biased stretch (low complexity) spans 37-48 (NSNNNNNSTSNN). The SLFG 3; approximate repeat unit spans residues 51–54 (SGFG). Low complexity-rich tracts occupy residues 56-81 (FTSA…AFGQ) and 92-104 (GSLN…NGNT). The SLFG 4 repeat unit spans residues 66–69 (SLFG). The GLFG 1; approximate repeat unit spans residues 77 to 80 (GAFG). The stretch at 89–92 (SPFG) is one SLFG 5; approximate repeat. The FG 4 repeat unit spans residues 105-106 (FG). The GLFG 2; approximate repeat unit spans residues 112 to 115 (GSFG). Residues 121-136 (AFNNNSNSTNSPFGFN) are compositionally biased toward low complexity. Positions 121–172 (AFNNNSNSTNSPFGFNKPNTGGTLFGSQNNNSAGTSSLFGGQSTSTTGTFGN) are disordered. An SLFG 6; approximate repeat occupies 131–134 (SPFG). Residues 137-153 (KPNTGGTLFGSQNNNSA) show a composition bias toward polar residues. Residues 145-146 (FG) form an FG 5 repeat. Positions 154 to 172 (GTSSLFGGQSTSTTGTFGN) are enriched in low complexity. The SLFG 7 repeat unit spans residues 157–160 (SLFG). The GLFG 3; approximate repeat unit spans residues 168-171 (GTFG). Residues 175-178 (SSFG) form an SLFG 8; approximate repeat. One copy of the FG 6 repeat lies at 189-190 (FG). A disordered region spans residues 190-394 (GAGNNSQSNT…NNQQQQSTGL (205 aa)). A compositionally biased stretch (polar residues) spans 192-245 (GNNSQSNTTGSLFGNQQSSAFGTNNQQGSLFGQQSQNTNNAFGNQNQLGGSSFG). One copy of the SLFG 9 repeat lies at 202 to 205 (SLFG). An SLFG 10; approximate repeat occupies 210–213 (SAFG). One copy of the SLFG 11 repeat lies at 220-223 (SLFG). An FG 7 repeat occupies 233–234 (FG). Residues 242-245 (SSFG) form an SLFG 12; approximate repeat. The SLFG 13 repeat unit spans residues 253–256 (SLFG). Positions 259 to 293 (NNTLGNTTNNRNGLFGQMNSSNQGSSNSGLFGQNS) are enriched in low complexity. GLFG repeat units lie at residues 271 to 274 (GLFG) and 287 to 290 (GLFG). The span at 294-303 (MNSSTQGVFG) shows a compositional bias: polar residues. The GLFG 6; approximate repeat unit spans residues 300 to 303 (GVFG). The span at 304–317 (QNNNQMQINGNNNN) shows a compositional bias: low complexity. The stretch at 318–321 (SLFG) is one SLFG 14 repeat. GLFG repeat units lie at residues 333–336 (GLFG), 345–348 (GLFG), 358–361 (GLFG), 379–382 (GLFG), and 393–396 (GLFG). A compositionally biased stretch (low complexity) spans 336 to 352 (GQNNQQQGSGLFGQNSQ). Positions 353–377 (TSGSSGLFGQNNQKQPNTFTQSNTG) are enriched in polar residues. SLFG repeat units follow at residues 405–408 (SLFG), 417–420 (SLFG), and 436–439 (SLFG). Residues 448-449 (FG) form an FG 8 repeat. Residues 462 to 465 (SLFG) form an SLFG 18 repeat. The SLFG 19; approximate repeat unit spans residues 474 to 477 (SLFG). GLFG repeat units lie at residues 490-493 (GLFG), 506-509 (GLFG), and 523-526 (GLFG). An FG 9 repeat occupies 542 to 543 (FG). A GLFG 15 repeat occupies 550–553 (GLFG). One copy of the FG 10 repeat lies at 569-570 (FG). 2 disordered regions span residues 672 to 697 (TLER…LNSN) and 745 to 794 (DDQA…PMIE). Over residues 679-697 (GSSTSNSITDPESSYLNSN) the composition is skewed to polar residues. The segment covering 757–775 (LTEKAHSPQTDLKDDHDES) has biased composition (basic and acidic residues). 2 positions are modified to phosphoserine: Ser763 and Ser783. The segment covering 777-790 (PDPQSKSPNGSTSI) has biased composition (polar residues). Positions 814 to 956 (KNNYYISPSI…GTYSYTIDHP (143 aa)) constitute a Peptidase S59 domain. Residues 816 to 955 (NYYISPSIET…TGTYSYTIDH (140 aa)) are nucleoporin RNA-binding motif (NRM).

The protein belongs to the nucleoporin GLFG family. Component of the nuclear pore complex (NPC). NPC constitutes the exclusive means of nucleocytoplasmic transport. NPCs allow the passive diffusion of ions and small molecules and the active, nuclear transport receptor-mediated bidirectional transport of macromolecules such as proteins, RNAs, ribonucleoparticles (RNPs), and ribosomal subunits across the nuclear envelope. Due to its 8-fold rotational symmetry, all subunits are present with 8 copies or multiples thereof. Through its FG repeats NUP100 interacts with numerous karyopherins including KAP95, and MEX67.

The protein resides in the nucleus. It is found in the nuclear pore complex. It localises to the nucleus membrane. Its function is as follows. Functions as a component of the nuclear pore complex (NPC). NPC components, collectively referred to as nucleoporins (NUPs), can play the role of both NPC structural components and of docking or interaction partners for transiently associated nuclear transport factors. Active directional transport is assured by both, a Phe-Gly (FG) repeat affinity gradient for these transport factors across the NPC and a transport cofactor concentration gradient across the nuclear envelope (GSP1 and GSP2 GTPases associated predominantly with GTP in the nucleus, with GDP in the cytoplasm). NUP100 plays an important role in several nuclear export and import pathways including poly(A)+ RNA and protein transport. This is Nucleoporin NUP100/NSP100 (NUP100) from Saccharomyces cerevisiae (strain ATCC 204508 / S288c) (Baker's yeast).